The chain runs to 218 residues: Structural protein V19 (218 aa).

It localises to the virion. This Sputnik virophage protein is Structural protein V19.